The chain runs to 262 residues: Type III pantothenate kinase (262 aa).

9-16 is an ATP binding site; sequence DIGNTNVK. Residues Y103 and 110-113 contribute to the substrate site; that span reads GADR. Catalysis depends on D112, which acts as the Proton acceptor. D134 serves as a coordination point for K(+). T137 is an ATP binding site. T190 is a substrate binding site.

The protein belongs to the type III pantothenate kinase family. In terms of assembly, homodimer. It depends on NH4(+) as a cofactor. The cofactor is K(+).

Its subcellular location is the cytoplasm. The enzyme catalyses (R)-pantothenate + ATP = (R)-4'-phosphopantothenate + ADP + H(+). It participates in cofactor biosynthesis; coenzyme A biosynthesis; CoA from (R)-pantothenate: step 1/5. Functionally, catalyzes the phosphorylation of pantothenate (Pan), the first step in CoA biosynthesis. This is Type III pantothenate kinase from Nitratidesulfovibrio vulgaris (strain ATCC 29579 / DSM 644 / CCUG 34227 / NCIMB 8303 / VKM B-1760 / Hildenborough) (Desulfovibrio vulgaris).